A 672-amino-acid polypeptide reads, in one-letter code: Acetoacetyl-CoA synthetase (672 aa).

This sequence belongs to the ATP-dependent AMP-binding enzyme family. Abundant in male subcutaneous white adipose tissue after weaning. In white adipose tissue, it is preferentially detected in mature adipocytes but not in preadipocytes. The expression in primary preadipocytes increases during the adipocyte differentiation. In brain, it is expressed in the midbrain, pons/medulla, cerebral cortex, hippocampus and cerebellum. The expression in the cerebellum is restricted primarily to glial cells, while in the cerebral cortex, it is restricted to neuronal cells.

It is found in the cytoplasm. It localises to the cytosol. It catalyses the reaction acetoacetate + ATP + CoA = acetoacetyl-CoA + AMP + diphosphate. Converts acetoacetate to acetoacetyl-CoA in the cytosol. Ketone body-utilizing enzyme, responsible for the synthesis of cholesterol and fatty acids. This chain is Acetoacetyl-CoA synthetase (Aacs), found in Rattus norvegicus (Rat).